A 490-amino-acid polypeptide reads, in one-letter code: uncharacterized protein (490 aa).

The helical transmembrane segment at 27-47 threads the bilayer; it reads VYVFLTTIILLLSLISTLIII.

It is found in the membrane. This is an uncharacterized protein from Borreliella burgdorferi (strain ATCC 35210 / DSM 4680 / CIP 102532 / B31) (Borrelia burgdorferi).